The following is a 160-amino-acid chain: Transcription antitermination protein NusB (160 aa).

This sequence belongs to the NusB family.

In terms of biological role, involved in transcription antitermination. Required for transcription of ribosomal RNA (rRNA) genes. Binds specifically to the boxA antiterminator sequence of the ribosomal RNA (rrn) operons. The polypeptide is Transcription antitermination protein NusB (Rhizobium johnstonii (strain DSM 114642 / LMG 32736 / 3841) (Rhizobium leguminosarum bv. viciae)).